A 228-amino-acid polypeptide reads, in one-letter code: PKHD-type hydroxylase XAC2942 (228 aa).

Residues 78 to 180 (RIYPPLFNRY…RVACFFWAQS (103 aa)) enclose the Fe2OG dioxygenase domain. Fe cation contacts are provided by His-96, Asp-98, and His-161. Residue Arg-171 coordinates 2-oxoglutarate.

The cofactor is Fe(2+). L-ascorbate serves as cofactor.

The chain is PKHD-type hydroxylase XAC2942 from Xanthomonas axonopodis pv. citri (strain 306).